A 335-amino-acid chain; its full sequence is N-lysine methyltransferase KMT5A-A (335 aa).

Disordered stretches follow at residues 1 to 91 (MGRG…EVEK) and 133 to 183 (LPPE…EIES). Basic and acidic residues predominate over residues 67 to 91 (SVTHHESKCLGKPSTETRKKAEVEK). The span at 145 to 161 (VKNKPLRKKTQRQKSPN) shows a compositional bias: basic residues. The SET domain maps to 199–320 (EGIKMHMITG…VGEELLYDYG (122 aa)). Residues 209-211 (KGR), Tyr-254, and 281-282 (NH) contribute to the S-adenosyl-L-methionine site.

It belongs to the class V-like SAM-binding methyltransferase superfamily. Histone-lysine methyltransferase family. PR/SET subfamily.

The protein resides in the nucleus. It localises to the chromosome. The catalysed reaction is L-lysyl(20)-[histone H4] + S-adenosyl-L-methionine = N(6)-methyl-L-lysyl(20)-[histone H4] + S-adenosyl-L-homocysteine + H(+). It catalyses the reaction L-lysyl-[protein] + S-adenosyl-L-methionine = N(6)-methyl-L-lysyl-[protein] + S-adenosyl-L-homocysteine + H(+). Functionally, protein-lysine N-methyltransferase that monomethylates both histones and non-histone proteins. Specifically monomethylates 'Lys-20' of histone H4 (H4K20me1). H4K20me1 is enriched during mitosis and represents a specific tag for epigenetic transcriptional repression. Mainly functions in euchromatin regions, thereby playing a central role in the silencing of euchromatic genes. Required for cell proliferation, probably by contributing to the maintenance of proper higher-order structure of DNA during mitosis. Involved in chromosome condensation and proper cytokinesis. This is N-lysine methyltransferase KMT5A-A from Xenopus laevis (African clawed frog).